Consider the following 382-residue polypeptide: Serine protease 23 (382 aa).

The signal sequence occupies residues 1–22 (MAGIPGLFILLVLLCVFMQVSP). N92 carries an N-linked (GlcNAc...) asparagine glycan. Cysteines 159 and 175 form a disulfide. The Charge relay system role is filled by H174. The N-linked (GlcNAc...) asparagine glycan is linked to N206. Active-site charge relay system residues include D239 and S315.

The protein belongs to the peptidase S1 family.

It localises to the secreted. The protein is Serine protease 23 (Prss23) of Mus musculus (Mouse).